Here is a 376-residue protein sequence, read N- to C-terminus: Inactive CLIP domain-containing serine protease A28 (376 aa).

The N-terminal stretch at 1 to 19 (MKVLLFCIVISLTTLIASG) is a signal peptide. The Clip domain maps to 24 to 80 (EELRCPGGYCVSKYLCPNGTFIDDIKHAQTTQLIGLRAGLDIDDFDDCNDYLLVCCQ). 3 cysteine pairs are disulfide-bonded: Cys28–Cys78, Cys33–Cys71, and Cys39–Cys79. A glycan (N-linked (GlcNAc...) asparagine) is linked at Asn41. Residues 85-106 (PTATSTEKPATSDELIEPPPST) are disordered. Residues 114-364 (NEGGLIYDLR…YVQWLNEHIV (251 aa)) enclose the Peptidase S1 domain. N-linked (GlcNAc...) asparagine glycans are attached at residues Asn125 and Asn279. 3 disulfide bridges follow: Cys251-Cys321, Cys280-Cys301, and Cys311-Cys340. Asn369 is a glycosylation site (N-linked (GlcNAc...) asparagine).

This sequence belongs to the peptidase S1 family. CLIP subfamily. May form a heterodimer of a light chain and a heavy chain; disulfide-linked. Secreted as a full-length protein. Proteolytically cleaved into two chains which probably remain covalently linked. Cleavage is induced by fungus B.bassiana and Gram-positive or Gram-negative bacteria infection.

It is found in the secreted. In terms of biological role, inactive serine protease which plays an essential role in the innate immune response against bacteria, fungi and protozoa infection by activating the melanization cascade. In the melanization cascade, acts downstream of TEP1, SPCLIP1 and CLIPA8 to promote CLIPC9 proteolytic cleavage. In the susceptible strain G3, appears to be dispensable for parasite P.berghei ookinete elimination which occurs by lysis. Required for the melanization of Gram-positive and Gram-negative bacteria. Required for the melanization of fungus B.bassiana. The sequence is that of Inactive CLIP domain-containing serine protease A28 from Anopheles gambiae (African malaria mosquito).